Consider the following 286-residue polypeptide: MTAQNIDGTLISQTVRSEVAARVKARVAAGLRAPGLAVVLVGEDPASQVYVGSKRRACEEVGFVSKSFDLPASTSEEELLALIDELNNDNEIDGILVQLPLPAGIDTTHVLERIHPEKDVDGFHPYNVGRLAQRIPKLRSCTPKGIITLLDRYNIELRGKHAVVVGASNIVGRPMTLELLLAGCTTTTCHRFTKDLESHVRQADVVVVAVGKPNFIPGEWIKKGAVVVDVGINRLDSGKLVGDVEYDKARESASFITPVPGGVGPMTVASLIENTMLACEQFHTEQ.

NADP(+) is bound by residues 166 to 168 (GAS) and I232.

It belongs to the tetrahydrofolate dehydrogenase/cyclohydrolase family. Homodimer.

It carries out the reaction (6R)-5,10-methylene-5,6,7,8-tetrahydrofolate + NADP(+) = (6R)-5,10-methenyltetrahydrofolate + NADPH. It catalyses the reaction (6R)-5,10-methenyltetrahydrofolate + H2O = (6R)-10-formyltetrahydrofolate + H(+). The protein operates within one-carbon metabolism; tetrahydrofolate interconversion. Functionally, catalyzes the oxidation of 5,10-methylenetetrahydrofolate to 5,10-methenyltetrahydrofolate and then the hydrolysis of 5,10-methenyltetrahydrofolate to 10-formyltetrahydrofolate. The chain is Bifunctional protein FolD from Vibrio parahaemolyticus serotype O3:K6 (strain RIMD 2210633).